A 430-amino-acid chain; its full sequence is Histidine--tRNA ligase (430 aa).

This sequence belongs to the class-II aminoacyl-tRNA synthetase family. As to quaternary structure, homodimer.

The protein localises to the cytoplasm. It catalyses the reaction tRNA(His) + L-histidine + ATP = L-histidyl-tRNA(His) + AMP + diphosphate + H(+). The protein is Histidine--tRNA ligase of Lactococcus lactis subsp. cremoris (strain SK11).